Reading from the N-terminus, the 243-residue chain is Pyridoxine 5'-phosphate synthase (243 aa).

Asparagine 7 contributes to the 3-amino-2-oxopropyl phosphate binding site. 9–10 (DH) lines the 1-deoxy-D-xylulose 5-phosphate pocket. Residue arginine 18 coordinates 3-amino-2-oxopropyl phosphate. Histidine 43 acts as the Proton acceptor in catalysis. 1-deoxy-D-xylulose 5-phosphate-binding residues include arginine 45 and histidine 50. The active-site Proton acceptor is glutamate 70. Residue threonine 100 coordinates 1-deoxy-D-xylulose 5-phosphate. Catalysis depends on histidine 190, which acts as the Proton donor. 3-amino-2-oxopropyl phosphate contacts are provided by residues glycine 191 and 212 to 213 (GH).

It belongs to the PNP synthase family. As to quaternary structure, homooctamer; tetramer of dimers.

Its subcellular location is the cytoplasm. It catalyses the reaction 3-amino-2-oxopropyl phosphate + 1-deoxy-D-xylulose 5-phosphate = pyridoxine 5'-phosphate + phosphate + 2 H2O + H(+). It functions in the pathway cofactor biosynthesis; pyridoxine 5'-phosphate biosynthesis; pyridoxine 5'-phosphate from D-erythrose 4-phosphate: step 5/5. Its function is as follows. Catalyzes the complicated ring closure reaction between the two acyclic compounds 1-deoxy-D-xylulose-5-phosphate (DXP) and 3-amino-2-oxopropyl phosphate (1-amino-acetone-3-phosphate or AAP) to form pyridoxine 5'-phosphate (PNP) and inorganic phosphate. The protein is Pyridoxine 5'-phosphate synthase of Prochlorococcus marinus (strain MIT 9211).